Reading from the N-terminus, the 616-residue chain is Chaperone protein HscA (616 aa).

Belongs to the heat shock protein 70 family.

Chaperone involved in the maturation of iron-sulfur cluster-containing proteins. Has a low intrinsic ATPase activity which is markedly stimulated by HscB. Involved in the maturation of IscU. This Yersinia enterocolitica serotype O:8 / biotype 1B (strain NCTC 13174 / 8081) protein is Chaperone protein HscA.